Consider the following 440-residue polypeptide: Probable D-serine dehydratase (440 aa).

Position 120 is an N6-(pyridoxal phosphate)lysine (Lys-120).

This sequence belongs to the serine/threonine dehydratase family. DsdA subfamily. Requires pyridoxal 5'-phosphate as cofactor.

It catalyses the reaction D-serine = pyruvate + NH4(+). The chain is Probable D-serine dehydratase from Shouchella clausii (strain KSM-K16) (Alkalihalobacillus clausii).